A 376-amino-acid chain; its full sequence is Succinyl-diaminopimelate desuccinylase (376 aa).

H67 lines the Zn(2+) pocket. D69 is an active-site residue. A Zn(2+)-binding site is contributed by D100. E134 (proton acceptor) is an active-site residue. Residues E135, E163, and H349 each contribute to the Zn(2+) site.

It belongs to the peptidase M20A family. DapE subfamily. As to quaternary structure, homodimer. It depends on Zn(2+) as a cofactor. The cofactor is Co(2+).

It carries out the reaction N-succinyl-(2S,6S)-2,6-diaminopimelate + H2O = (2S,6S)-2,6-diaminopimelate + succinate. The protein operates within amino-acid biosynthesis; L-lysine biosynthesis via DAP pathway; LL-2,6-diaminopimelate from (S)-tetrahydrodipicolinate (succinylase route): step 3/3. Catalyzes the hydrolysis of N-succinyl-L,L-diaminopimelic acid (SDAP), forming succinate and LL-2,6-diaminopimelate (DAP), an intermediate involved in the bacterial biosynthesis of lysine and meso-diaminopimelic acid, an essential component of bacterial cell walls. This Xanthomonas campestris pv. campestris (strain B100) protein is Succinyl-diaminopimelate desuccinylase.